A 207-amino-acid polypeptide reads, in one-letter code: ATP-dependent Clp protease proteolytic subunit (207 aa).

The active-site Nucleophile is Ser111. The active site involves His136.

It belongs to the peptidase S14 family. As to quaternary structure, fourteen ClpP subunits assemble into 2 heptameric rings which stack back to back to give a disk-like structure with a central cavity, resembling the structure of eukaryotic proteasomes.

The protein resides in the cytoplasm. It carries out the reaction Hydrolysis of proteins to small peptides in the presence of ATP and magnesium. alpha-casein is the usual test substrate. In the absence of ATP, only oligopeptides shorter than five residues are hydrolyzed (such as succinyl-Leu-Tyr-|-NHMec, and Leu-Tyr-Leu-|-Tyr-Trp, in which cleavage of the -Tyr-|-Leu- and -Tyr-|-Trp bonds also occurs).. Functionally, cleaves peptides in various proteins in a process that requires ATP hydrolysis. Has a chymotrypsin-like activity. Plays a major role in the degradation of misfolded proteins. This Photorhabdus laumondii subsp. laumondii (strain DSM 15139 / CIP 105565 / TT01) (Photorhabdus luminescens subsp. laumondii) protein is ATP-dependent Clp protease proteolytic subunit.